Consider the following 273-residue polypeptide: HLA class II histocompatibility antigen, DO beta chain (273 aa).

An N-terminal signal peptide occupies residues 1–26 (MGSGWVPWVVALLVNLTRLDSSMTQG). Positions 27–120 (TDSPEDFVIQ…LGAPFTVGRK (94 aa)) are beta-1. Residues 27–224 (TDSPEDFVIQ…RAQSEYSWRK (198 aa)) are Extracellular-facing. 2 disulfides stabilise this stretch: Cys41-Cys105 and Cys143-Cys199. Asn45 is a glycosylation site (N-linked (GlcNAc...) asparagine). The tract at residues 121–214 (VQPEVTVYPE…SLLSPVSVEW (94 aa)) is beta-2. The Ig-like C1-type domain maps to 123–213 (PEVTVYPERT…SSLLSPVSVE (91 aa)). The segment at 215–224 (RAQSEYSWRK) is connecting peptide. The chain crosses the membrane as a helical span at residues 225 to 245 (MLSGIAAFLLGLIFLLVGIVI). Topologically, residues 246–273 (QLRAQKGYVRTQMSGNEVSRAVLLPQSC) are cytoplasmic.

The protein belongs to the MHC class II family. Heterodimer of an alpha chain (DOA) and a beta chain (DOB). Forms a heterotetrameric complex with an HLA-DM molecule during intracellular transport in endosomal/lysosomal compartments in B-cells.

It is found in the endosome membrane. It localises to the lysosome membrane. Important modulator in the HLA class II restricted antigen presentation pathway by interaction with the HLA-DM molecule in B-cells. Modifies peptide exchange activity of HLA-DM. This chain is HLA class II histocompatibility antigen, DO beta chain (HLA-DOB), found in Homo sapiens (Human).